The chain runs to 240 residues: UDP-2,3-diacylglucosamine hydrolase (240 aa).

Residues D8, H10, D41, N79, and H114 each coordinate Mn(2+). Substrate is bound at residue 79 to 80; the sequence is NR. Substrate contacts are provided by D122, S160, N164, K167, and H195. Mn(2+) contacts are provided by H195 and H197.

This sequence belongs to the LpxH family. Mn(2+) serves as cofactor.

The protein resides in the cell inner membrane. It carries out the reaction UDP-2-N,3-O-bis[(3R)-3-hydroxytetradecanoyl]-alpha-D-glucosamine + H2O = 2-N,3-O-bis[(3R)-3-hydroxytetradecanoyl]-alpha-D-glucosaminyl 1-phosphate + UMP + 2 H(+). It participates in glycolipid biosynthesis; lipid IV(A) biosynthesis; lipid IV(A) from (3R)-3-hydroxytetradecanoyl-[acyl-carrier-protein] and UDP-N-acetyl-alpha-D-glucosamine: step 4/6. Functionally, hydrolyzes the pyrophosphate bond of UDP-2,3-diacylglucosamine to yield 2,3-diacylglucosamine 1-phosphate (lipid X) and UMP by catalyzing the attack of water at the alpha-P atom. Involved in the biosynthesis of lipid A, a phosphorylated glycolipid that anchors the lipopolysaccharide to the outer membrane of the cell. The protein is UDP-2,3-diacylglucosamine hydrolase of Klebsiella pneumoniae subsp. pneumoniae (strain ATCC 700721 / MGH 78578).